The sequence spans 608 residues: Protein UL27 (608 aa).

Residues 1–13 (MNPVDQPPPPPLT) show a composition bias toward pro residues. The interval 1 to 33 (MNPVDQPPPPPLTQQPEEQAKEDHDDGDERLFR) is disordered. Residues 18-33 (EQAKEDHDDGDERLFR) are compositionally biased toward basic and acidic residues.

This sequence belongs to the herpesviridae U4 family. Interacts with host KAT5, PSME3 and EP400.

It is found in the host nucleus. Its subcellular location is the host nucleolus. Functionally, promotes a cell cycle arrest in G0/G1 by inducing the proteasomal degradation of host histone acetyltransferase KAT5/Tip60. This is Protein UL27 (UL27) from Homo sapiens (Human).